We begin with the raw amino-acid sequence, 27 residues long: MHLNESLIYLFLETSCVAGAHFESLLD.

This is an uncharacterized protein from Saccharomyces cerevisiae (strain ATCC 204508 / S288c) (Baker's yeast).